Consider the following 259-residue polypeptide: Small ribosomal subunit protein uS2 (259 aa).

Residues 234-259 form a disordered region; the sequence is VAEDSEEVSTVDADAITAEDFETEEV. Residues 250–259 are compositionally biased toward acidic residues; sequence TAEDFETEEV.

It belongs to the universal ribosomal protein uS2 family.

The protein is Small ribosomal subunit protein uS2 of Sulfurimonas denitrificans (strain ATCC 33889 / DSM 1251) (Thiomicrospira denitrificans (strain ATCC 33889 / DSM 1251)).